Consider the following 137-residue polypeptide: Large ribosomal subunit protein uL16 (137 aa).

The protein belongs to the universal ribosomal protein uL16 family. As to quaternary structure, part of the 50S ribosomal subunit.

Functionally, binds 23S rRNA and is also seen to make contacts with the A and possibly P site tRNAs. This is Large ribosomal subunit protein uL16 from Streptococcus thermophilus (strain CNRZ 1066).